Reading from the N-terminus, the 1235-residue chain is ATP-dependent helicase/nuclease subunit A (1235 aa).

A UvrD-like helicase ATP-binding domain is found at 4 to 470 (REYTLSQKQA…IILAENFRSM (467 aa)). 25–32 (ASAGSGKT) contributes to the ATP binding site. The region spanning 501 to 795 (QFGAKYYPDE…KLMTIHGSKG (295 aa)) is the UvrD-like helicase C-terminal domain.

It belongs to the helicase family. AddA subfamily. As to quaternary structure, heterodimer of AddA and AddB/RexB. Requires Mg(2+) as cofactor.

It catalyses the reaction Couples ATP hydrolysis with the unwinding of duplex DNA by translocating in the 3'-5' direction.. It carries out the reaction ATP + H2O = ADP + phosphate + H(+). Its function is as follows. The heterodimer acts as both an ATP-dependent DNA helicase and an ATP-dependent, dual-direction single-stranded exonuclease. Recognizes the chi site generating a DNA molecule suitable for the initiation of homologous recombination. The AddA nuclease domain is required for chi fragment generation; this subunit has the helicase and 3' -&gt; 5' nuclease activities. The sequence is that of ATP-dependent helicase/nuclease subunit A from Pediococcus pentosaceus (strain ATCC 25745 / CCUG 21536 / LMG 10740 / 183-1w).